The sequence spans 743 residues: Ovocleidin-116 (743 aa).

Positions 1–18 (MRATLFCLCLCLLGTVLP) are cleaved as a signal peptide. A disulfide bridge links C31 with C42. The N-linked (GlcNAc...) asparagine glycan is linked to N62. The tract at residues 68 to 225 (KEEGDHQGTI…GTMGTGDSAI (158 aa)) is disordered. A compositionally biased stretch (polar residues) spans 129–141 (DSNSVYPTSTSVE). Positions 169–179 (GPHGDGDGGNG) are enriched in gly residues. The N-linked (GlcNAc...) asparagine; partial glycan is linked to N293. Disordered stretches follow at residues 333–356 (GDSV…ATEI), 385–454 (SGKG…GPER), 505–534 (ARTQ…QQEV), 549–577 (RHRA…STGG), 628–649 (DPWV…TVAG), and 692–743 (SGVG…RQSL). A compositionally biased stretch (low complexity) spans 402–420 (ATMTTRGGRGTASSGLTTG). The segment covering 421-431 (DCSTAASTPSR) has biased composition (polar residues). The segment covering 549–558 (RHRARVRPES) has biased composition (basic and acidic residues).

Belongs to the osteoregulin family. Post-translationally, asn-62 is fully glycosylated, whereas only less than 10% of Asn-293 seem to be glycosylated. In the eggshell, expressed mainly in the palisade and mammillary layers. Expression also detected in the hypertrophic zone of the epiphyseal growth plate, and in cortical and medullary bone (at protein level). Highly expressed in uterus. Not detected in the proximal oviduct, liver, magnum, duodenum and kidney.

Its subcellular location is the secreted. It is found in the extracellular space. It localises to the extracellular matrix. Its function is as follows. Major component of the eggshell matrix. May play an important role in the regulation of calcite growth during eggshell calcification. May also regulate the mineralization process in developing and growing bones. This chain is Ovocleidin-116, found in Gallus gallus (Chicken).